Reading from the N-terminus, the 483-residue chain is V-type proton ATPase subunit H (483 aa).

Residue S483 is modified to Phosphoserine.

Belongs to the V-ATPase H subunit family. V-ATPase is a heteromultimeric enzyme made up of two complexes: the ATP-hydrolytic V1 complex and the proton translocation V0 complex. The V1 complex consists of three catalytic AB heterodimers that form a heterohexamer, three peripheral stalks each consisting of EG heterodimers, one central rotor including subunits D and F, and the regulatory subunits C and H. The proton translocation complex V0 consists of the proton transport subunit a, a ring of proteolipid subunits c9c'', rotary subunit d, subunits e and f, and the accessory subunits ATP6AP1/Ac45 and ATP6AP2/PRR. Interacts with AP2M1.

The protein resides in the cytoplasmic vesicle. The protein localises to the clathrin-coated vesicle membrane. Its function is as follows. Subunit of the V1 complex of vacuolar(H+)-ATPase (V-ATPase), a multisubunit enzyme composed of a peripheral complex (V1) that hydrolyzes ATP and a membrane integral complex (V0) that translocates protons. V-ATPase is responsible for acidifying and maintaining the pH of intracellular compartments and in some cell types, is targeted to the plasma membrane, where it is responsible for acidifying the extracellular environment. Subunit H is essential for V-ATPase activity, but not for the assembly of the complex. Involved in the endocytosis mediated by clathrin-coated pits, required for the formation of endosomes. The sequence is that of V-type proton ATPase subunit H (ATP6V1H) from Sus scrofa (Pig).